Consider the following 231-residue polypeptide: Ribosomal RNA small subunit methyltransferase G (231 aa).

Residues Gly85, Phe90, and Arg154 each contribute to the S-adenosyl-L-methionine site.

This sequence belongs to the methyltransferase superfamily. RNA methyltransferase RsmG family.

It localises to the cytoplasm. The catalysed reaction is guanosine(527) in 16S rRNA + S-adenosyl-L-methionine = N(7)-methylguanosine(527) in 16S rRNA + S-adenosyl-L-homocysteine. Its function is as follows. Specifically methylates the N7 position of guanine in position 527 of 16S rRNA. The sequence is that of Ribosomal RNA small subunit methyltransferase G from Rhodopseudomonas palustris (strain BisA53).